The following is a 134-amino-acid chain: Small ribosomal subunit protein uS9c (134 aa).

Belongs to the universal ribosomal protein uS9 family.

It localises to the plastid. The protein resides in the chloroplast. The sequence is that of Small ribosomal subunit protein uS9c (rps9) from Guillardia theta (Cryptophyte).